The sequence spans 486 residues: Cardiolipin synthase A (486 aa).

2 consecutive transmembrane segments (helical) span residues 3–23 (TFYTVVSWLVILGYWVLIAGV) and 38–58 (MAWLLIIYILPLVGIIAYLSV). PLD phosphodiesterase domains lie at 219-246 (MDLRQHRKMVMIDNYIAYTGSMNMVDPR) and 399-426 (EGGLLHTKSVLVDGELSLVGTVNLDMRS). Residues His224, Lys226, Asp231, His404, Lys406, and Asp411 contribute to the active site.

Belongs to the phospholipase D family. Cardiolipin synthase subfamily. ClsA sub-subfamily.

Its subcellular location is the cell inner membrane. The catalysed reaction is 2 a 1,2-diacyl-sn-glycero-3-phospho-(1'-sn-glycerol) = a cardiolipin + glycerol. Catalyzes the reversible phosphatidyl group transfer from one phosphatidylglycerol molecule to another to form cardiolipin (CL) (diphosphatidylglycerol) and glycerol. The protein is Cardiolipin synthase A of Salmonella arizonae (strain ATCC BAA-731 / CDC346-86 / RSK2980).